The primary structure comprises 209 residues: Cytidylate kinase (209 aa).

G9–T17 is an ATP binding site.

Belongs to the cytidylate kinase family. Type 1 subfamily.

It localises to the cytoplasm. It catalyses the reaction CMP + ATP = CDP + ADP. The enzyme catalyses dCMP + ATP = dCDP + ADP. The sequence is that of Cytidylate kinase from Granulibacter bethesdensis (strain ATCC BAA-1260 / CGDNIH1).